The sequence spans 23 residues: Paralytic peptide 2 (23 aa).

Cys-7 and Cys-19 are oxidised to a cystine.

It belongs to the GBP/PSP1/paralytic peptide family. As to expression, hemolymph.

Causes rapid, rigid paralysis when injected into Lepidopteran larvae. The physiological role may be to reduce hemolymph loss following injury and promote wound healing. This Spodoptera exigua (Beet armyworm) protein is Paralytic peptide 2.